Reading from the N-terminus, the 372-residue chain is Bifunctional coenzyme PQQ synthesis protein C/D (372 aa).

The interval 1–267 (MTAQFPPPVP…VAETNSAEDS (267 aa)) is pqqC. The disordered stretch occupies residues 260–288 (ETNSAEDSPAAAASPAATTAEPTAFSGSD). The span at 264–283 (AEDSPAAAASPAATTAEPTA) shows a compositional bias: low complexity. The linker stretch occupies residues 268-280 (PAAAASPAATTAE). The tract at residues 281–372 (PTAFSGSDVP…GLAQKRVLER (92 aa)) is pqqD.

It in the N-terminal section; belongs to the PqqC family. This sequence in the C-terminal section; belongs to the PqqD family. As to quaternary structure, monomer. Interacts with PqqE.

The catalysed reaction is 6-(2-amino-2-carboxyethyl)-7,8-dioxo-1,2,3,4,7,8-hexahydroquinoline-2,4-dicarboxylate + 3 O2 = pyrroloquinoline quinone + 2 H2O2 + 2 H2O + H(+). Its pathway is cofactor biosynthesis; pyrroloquinoline quinone biosynthesis. Its function is as follows. The PqqC region is involved in ring cyclization and eight-electron oxidation of 3a-(2-amino-2-carboxyethyl)-4,5-dioxo-4,5,6,7,8,9-hexahydroquinoline-7,9-dicarboxylic-acid to PQQ. In terms of biological role, the PqqD region functions as a PqqA binding domain and presents PqqA to PqqE. The chain is Bifunctional coenzyme PQQ synthesis protein C/D (pqqCD) from Methylorubrum extorquens (strain ATCC 14718 / DSM 1338 / JCM 2805 / NCIMB 9133 / AM1) (Methylobacterium extorquens).